The primary structure comprises 548 residues: Luciferin 4-monooxygenase (548 aa).

The short motif at A546–M548 is the Microbody targeting signal element.

Belongs to the ATP-dependent AMP-binding enzyme family. It depends on Mg(2+) as a cofactor.

It is found in the peroxisome. It carries out the reaction firefly D-luciferin + ATP + O2 = firefly oxyluciferin + hnu + AMP + CO2 + diphosphate. Produces green light with a wavelength of 544 nm. This chain is Luciferin 4-monooxygenase, found in Nipponoluciola cruciata (Genji firefly).